Consider the following 241-residue polypeptide: Platelet-derived growth factor subunit B (241 aa).

The signal sequence occupies residues 1–20 (MNRCWALFLPLCCYLRLVSA). The propeptide at 21–81 (EGDPIPEELY…ELESSSRGRR (61 aa)) is removed in mature form. Asn-63 is a glycosylation site (N-linked (GlcNAc...) asparagine). 3 cysteine pairs are disulfide-bonded: Cys-97-Cys-141, Cys-130-Cys-178, and Cys-134-Cys-180. Positions 191 to 241 (RSPGTSREQRAKTPQARVTIRTVRIRRPPKGKHRKFKHTHDKAALKETLGA) are cleaved as a propeptide — removed in mature form. Residues 217–230 (RPPKGKHRKFKHTH) show a composition bias toward basic residues. The disordered stretch occupies residues 217–241 (RPPKGKHRKFKHTHDKAALKETLGA).

It belongs to the PDGF/VEGF growth factor family. As to quaternary structure, antiparallel homodimer; disulfide-linked. Antiparallel heterodimer with PDGFA; disulfide-linked. The PDGFB homodimer interacts with PDGFRA and PDGFRB homodimers, and with heterodimers formed by PDGFRA and PDGFRB. The heterodimer composed of PDGFA and PDGFB interacts with PDGFRB homodimers, and with heterodimers formed by PDGFRA and PDGFRB. Interacts with XLKD1. Interacts with LRP1. Interacts with SORL1 (via the N-terminal ectodomain). Interacts with CD82; this interaction inhibits PDGFB-mediated signaling pathway. As to expression, localized to vascular smooth muscle cells. Also weakly expressed by cortical interstitial cells but absent in tubules. Up-regulated in areas of renal fibrosis. In mice with unilateral ureteral obstruction, an increased expression in interstitial cells and in some tubules observed after day 4.

It is found in the secreted. In terms of biological role, growth factor that plays an essential role in the regulation of embryonic development, cell proliferation, cell migration, survival and chemotaxis. Potent mitogen for cells of mesenchymal origin. Required for normal proliferation and recruitment of pericytes and vascular smooth muscle cells in the central nervous system, skin, lung, heart and placenta. Required for normal blood vessel development, and for normal development of kidney glomeruli. Plays an important role in wound healing. Signaling is modulated by the formation of heterodimers with PDGFA. In Mus musculus (Mouse), this protein is Platelet-derived growth factor subunit B (Pdgfb).